The sequence spans 208 residues: ATP-dependent Clp protease proteolytic subunit (208 aa).

Catalysis depends on Ser-106, which acts as the Nucleophile. Residue His-131 is part of the active site.

This sequence belongs to the peptidase S14 family. Fourteen ClpP subunits assemble into 2 heptameric rings which stack back to back to give a disk-like structure with a central cavity, resembling the structure of eukaryotic proteasomes.

The protein localises to the cytoplasm. It carries out the reaction Hydrolysis of proteins to small peptides in the presence of ATP and magnesium. alpha-casein is the usual test substrate. In the absence of ATP, only oligopeptides shorter than five residues are hydrolyzed (such as succinyl-Leu-Tyr-|-NHMec, and Leu-Tyr-Leu-|-Tyr-Trp, in which cleavage of the -Tyr-|-Leu- and -Tyr-|-Trp bonds also occurs).. Its function is as follows. Cleaves peptides in various proteins in a process that requires ATP hydrolysis. Has a chymotrypsin-like activity. Plays a major role in the degradation of misfolded proteins. This chain is ATP-dependent Clp protease proteolytic subunit, found in Caulobacter sp. (strain K31).